The chain runs to 871 residues: Probable LRR receptor-like serine/threonine-protein kinase At1g51810 (871 aa).

The first 20 residues, 1–20, serve as a signal peptide directing secretion; sequence MERHCLFFVIFSLILHLVQA. The Extracellular segment spans residues 21–512; the sequence is QDPIGFINLD…GRQIKSMTIP (492 aa). N-linked (GlcNAc...) asparagine glycosylation is found at Asn-93, Asn-179, Asn-229, Asn-283, Asn-295, Asn-396, Asn-410, Asn-439, Asn-458, Asn-463, and Asn-489. LRR repeat units follow at residues 405 to 426, 429 to 449, and 453 to 474; these read IITS…TIQN, NLQE…EFLA, and SLLV…KLIE. A helical membrane pass occupies residues 513 to 533; the sequence is IVASIGSVVAFTVALMIFCVV. The Cytoplasmic portion of the chain corresponds to 534-871; that stretch reads RKNNPSNDEA…FGTEVAPMAR (338 aa). The residue at position 568 (Thr-568) is a Phosphothreonine. One can recognise a Protein kinase domain in the interval 577 to 850; the sequence is NNFQKILGKG…QVVFELKECL (274 aa). Residues 583–591 and Lys-605 contribute to the ATP site; that span reads LGKGGFGIV. Position 650 is a phosphotyrosine (Tyr-650). Asp-702 acts as the Proton acceptor in catalysis. The residue at position 736 (Ser-736) is a Phosphoserine. 2 positions are modified to phosphothreonine: Thr-737 and Thr-742. Tyr-750 bears the Phosphotyrosine mark.

It belongs to the protein kinase superfamily. Ser/Thr protein kinase family.

The protein localises to the membrane. The enzyme catalyses L-seryl-[protein] + ATP = O-phospho-L-seryl-[protein] + ADP + H(+). It carries out the reaction L-threonyl-[protein] + ATP = O-phospho-L-threonyl-[protein] + ADP + H(+). The polypeptide is Probable LRR receptor-like serine/threonine-protein kinase At1g51810 (Arabidopsis thaliana (Mouse-ear cress)).